Consider the following 357-residue polypeptide: UDP-3-O-acylglucosamine N-acyltransferase (357 aa).

His258 serves as the catalytic Proton acceptor.

This sequence belongs to the transferase hexapeptide repeat family. LpxD subfamily. Homotrimer.

It catalyses the reaction a UDP-3-O-[(3R)-3-hydroxyacyl]-alpha-D-glucosamine + a (3R)-hydroxyacyl-[ACP] = a UDP-2-N,3-O-bis[(3R)-3-hydroxyacyl]-alpha-D-glucosamine + holo-[ACP] + H(+). Its pathway is bacterial outer membrane biogenesis; LPS lipid A biosynthesis. Catalyzes the N-acylation of UDP-3-O-acylglucosamine using 3-hydroxyacyl-ACP as the acyl donor. Is involved in the biosynthesis of lipid A, a phosphorylated glycolipid that anchors the lipopolysaccharide to the outer membrane of the cell. The polypeptide is UDP-3-O-acylglucosamine N-acyltransferase (Azorhizobium caulinodans (strain ATCC 43989 / DSM 5975 / JCM 20966 / LMG 6465 / NBRC 14845 / NCIMB 13405 / ORS 571)).